The primary structure comprises 314 residues: Elongator complex protein 5 (314 aa).

The protein belongs to the ELP5 family. As to quaternary structure, component of the elongator complex.

The protein resides in the cytoplasm. The protein localises to the nucleus. It participates in tRNA modification; 5-methoxycarbonylmethyl-2-thiouridine-tRNA biosynthesis. Functionally, component of the elongator complex, a multiprotein complex which is required for multiple tRNA modifications, including mcm5U (5-methoxycarbonylmethyl uridine), mcm5s2U (5-methoxycarbonylmethyl-2-thiouridine), and ncm5U (5-carbamoylmethyl uridine). The elongator complex catalyzes formation of carboxymethyluridine in the wobble base at position 34 in tRNAs. This Schizosaccharomyces pombe (strain 972 / ATCC 24843) (Fission yeast) protein is Elongator complex protein 5 (iki1).